The sequence spans 432 residues: Serine/threonine-protein phosphatase 2A activator 1 (432 aa).

The protein belongs to the PTPA-type PPIase family.

Its subcellular location is the cytoplasm. It localises to the nucleus. It carries out the reaction [protein]-peptidylproline (omega=180) = [protein]-peptidylproline (omega=0). In terms of biological role, PPIases accelerate the folding of proteins. It catalyzes the cis-trans isomerization of proline imidic peptide bonds in oligopeptides. Acts as a regulatory subunit for PP2A-like phosphatases modulating their activity or substrate specificity, probably by inducing a conformational change in the catalytic subunit, a direct target of the PPIase. Can reactivate inactive phosphatase PP2A-phosphatase methylesterase complexes (PP2Ai) in presence of ATP and Mg(2+) by dissociating the inactive form from the complex. This Emericella nidulans (strain FGSC A4 / ATCC 38163 / CBS 112.46 / NRRL 194 / M139) (Aspergillus nidulans) protein is Serine/threonine-protein phosphatase 2A activator 1 (rrd1).